The primary structure comprises 1163 residues: Voltage-gated inwardly rectifying potassium channel KCNH2 (1163 aa).

Residues 1 to 405 (MPVRRGHVAP…RIHRWTILHY (405 aa)) are Cytoplasmic-facing. Residues 17 to 88 (TIIRKFEGQS…AAQIAQALLG (72 aa)) form the PAS domain. In terms of domain architecture, PAC spans 92–144 (RKVEIAFYRKDGSCFLCLVDVVPVKNEDGAVIMFILNFEVVMEKDMVGSPAHD). The tract at residues 235–286 (VGPASASPVASIPGPHPSPRAQSLNPDASGSSCSLARTRSRESCASVRRASS) is disordered. Serine 239 and serine 245 each carry phosphoserine. The span at 254 to 271 (RAQSLNPDASGSSCSLAR) shows a compositional bias: polar residues. Phosphoserine is present on residues serine 285, serine 286, serine 322, and serine 353. A helical membrane pass occupies residues 406-426 (SPFKAVWDWLILLLVIYTAVF). Topologically, residues 427–452 (TPYSAAFLLKETEDGSQAPDCGYACQ) are extracellular. The chain crosses the membrane as a helical span at residues 453 to 473 (PLAVVDLLVDIMFIVDILINF). Residues 474 to 497 (RTTYVNANEEVVSHPGRIAVHYFK) are Cytoplasmic-facing. A helical transmembrane segment spans residues 498–518 (GWFLIDMVAAIPFDLLIFGSG). The Extracellular segment spans residues 519–522 (SEEL). The chain crosses the membrane as a helical; Voltage-sensor span at residues 523-543 (IGLLKTARLLRLVRVARKLDR). Topologically, residues 544-549 (YSEYGA) are cytoplasmic. A helical membrane pass occupies residues 550–570 (AVLFLLMCTFALIAHWLACIW). At 571–613 (YAIGNMEQPHMDSHIGWLHNLGDQIGKPYNSSGLGGPSIKDKY) the chain is on the extracellular side. An N-linked (GlcNAc...) asparagine glycan is attached at asparagine 600. Positions 614 to 634 (VTALYFTFSSLTSVGFGNVSP) form an intramembrane region, pore-forming. The Selectivity filter motif lies at 626–631 (SVGFGN). Residues 635 to 640 (NTNSEK) are Extracellular-facing. The chain crosses the membrane as a helical span at residues 641-661 (IFSICVMLIGSLMYASIFGNV). Over 662–1163 (SAIIQRLYSG…LHRHGSDPGS (502 aa)) the chain is Cytoplasmic. Positions 744–844 (PFRGATKGCL…IHRDDLLEVL (101 aa)) are cNMP-binding domain. Serine 873 and serine 876 each carry phosphoserine. 3 disordered regions span residues 873–992 (SPSS…NPLS), 1015–1043 (ELPRCPAPAPSLLNIPLSSPGRRSRGDVE), and 1126–1163 (AGAPELPQDGPTRRLSLPGQLGALTSQPLHRHGSDPGS). The span at 885–894 (RQRKRKLSFR) shows a compositional bias: basic residues. The segment covering 932–943 (GESPSSGPSSPE) has biased composition (low complexity). The residue at position 1018 (arginine 1018) is an Omega-N-methylarginine. Residues 1039-1066 (RGDVESRLDALQRQLNRLETRLSADMAT) adopt a coiled-coil conformation. Serine 1141 is subject to Phosphoserine.

The protein belongs to the potassium channel family. H (Eag) (TC 1.A.1.20) subfamily. Kv11.1/KCNH2 sub-subfamily. As to quaternary structure, the potassium channel is probably composed of a homo- or heterotetrameric complex of pore-forming alpha subunits that can associate with modulating beta subunits. Interacts with DNAJB12 and DNAJB14; chaperones DNAJB12 and DNAJB14 promote tetramerization. Heteromultimer with KCNH6/ERG2 and KCNH7/ERG3. Interacts with ALG10B. Forms a stable complex with KCNE1 or KCNE2, and that this heteromultimerization regulates Inward rectifier potassium channel activity. Interacts with CANX. The core-glycosylated, but not the fully glycosylated form interacts with RNF207. Interacts with NDFIP1 and NDFIP2; this interaction decreases the cell membrane expression by targeting KCNH2, through interaction with NEDD4L, for the degradation through the multivesicular bodies (MVBs)-lysosomal pathway. Post-translationally, phosphorylated on serine and threonine residues. Phosphorylation by PKA inhibits ion conduction. Highly expressed in brain and testis, slightly less so in heart, adrenal, retina and thymus. Detected at lower levels in lung, soleus, tibialis, and at very low levels in cornea and lens. A shorter transcript is detected in skeletal muscle. Found in pituitary.

The protein resides in the cell membrane. The enzyme catalyses K(+)(in) = K(+)(out). Functionally, pore-forming (alpha) subunit of voltage-gated inwardly rectifying potassium channel. Characterized by unusual gating kinetics by producing relatively small outward currents during membrane depolarization and large inward currents during subsequent repolarization which reflect a rapid inactivation during depolarization and quick recovery from inactivation but slow deactivation (closing) during repolarization. Channel properties are modulated by cAMP and subunit assembly. Forms a stable complex with KCNE1 or KCNE2, and that this heteromultimerization regulates inward rectifier potassium channel activity. This is Voltage-gated inwardly rectifying potassium channel KCNH2 from Rattus norvegicus (Rat).